The following is a 157-amino-acid chain: 2-C-methyl-D-erythritol 2,4-cyclodiphosphate synthase (157 aa).

A divalent metal cation is bound by residues Asp8 and His10. 4-CDP-2-C-methyl-D-erythritol 2-phosphate is bound by residues 8 to 10 (DVH) and 34 to 35 (HS). His42 contributes to the a divalent metal cation binding site. 4-CDP-2-C-methyl-D-erythritol 2-phosphate is bound by residues 56–58 (DIG), 61–65 (FPDTD), 100–106 (AQAPKMA), 132–135 (TTTE), Phe139, and Arg142.

This sequence belongs to the IspF family. As to quaternary structure, homotrimer. Requires a divalent metal cation as cofactor.

The catalysed reaction is 4-CDP-2-C-methyl-D-erythritol 2-phosphate = 2-C-methyl-D-erythritol 2,4-cyclic diphosphate + CMP. The protein operates within isoprenoid biosynthesis; isopentenyl diphosphate biosynthesis via DXP pathway; isopentenyl diphosphate from 1-deoxy-D-xylulose 5-phosphate: step 4/6. In terms of biological role, involved in the biosynthesis of isopentenyl diphosphate (IPP) and dimethylallyl diphosphate (DMAPP), two major building blocks of isoprenoid compounds. Catalyzes the conversion of 4-diphosphocytidyl-2-C-methyl-D-erythritol 2-phosphate (CDP-ME2P) to 2-C-methyl-D-erythritol 2,4-cyclodiphosphate (ME-CPP) with a corresponding release of cytidine 5-monophosphate (CMP). This chain is 2-C-methyl-D-erythritol 2,4-cyclodiphosphate synthase, found in Pseudomonas fluorescens (strain SBW25).